We begin with the raw amino-acid sequence, 753 residues long: MTILNHTLGFPRVGLRRELKKAQESYWAGNSTREELLAVGRELRARHWDQQKQAGIDLLPVGDFAWYDHVLTTSLLLGNVPARHQNKDGSVDIDTLFRIGRGRAPTGEPAAAAEMTKWFNTNYHYMVPEFVKGQQFKLTWTQLLDEVDEALALGHKVKPVLLGPITWLWLGKVKGEQFDRLSLLNDILPVYQQVLAELAKRGIEWVQIDEPALVLELPQAWLDAYKPAYDALQGQVKLLLTTYFEGVTPNLDTITALPVQGLHVDLVHGKDDVVELHKRLPSDWLLSAGLINGRNVWRADLTEKYVQIKDIVGKRDLWVASSCSLLHSPIDLSVETRLDAEVKSWFAFALQKCHELALLCDALNSGDTAALAEWSAPIQARRHSTRVHNPAVEKRLAAITAQDSQRANVYEVRAEAQRARFKLPAWPTTTIGSFPQTTEIRTLRLDFKKGNLDANNYRTGIAEHIRQAIVEQERLGLDVLVHGEAERNDMVEYFGEHLDGFVFTQNGWVQSYGSRCVKPPIVIGDVSRPAPITVEWAKYAQSMTDKPVKGMLTGPVTILCWSFPREDVSRETIAKQIALALRDEVADLEAAGIGIIQIDEPALREGLPLRRSDWDAYLQWGVEAFRINAAVAKDDTQIHTHMCYCEFNDIMDSIAALDADVITIETSRSDMELLESFEEFDYPNEIGPGVYDIHSPNVPSVEWIEALLKKAAKRIPAERLWVNPDCGLKTRGWPETRAALANMVQAAQNLRRG.

5-methyltetrahydropteroyltri-L-glutamate contacts are provided by residues 17-20 (RELK) and Lys117. L-homocysteine is bound by residues 431–433 (IGS) and Glu484. L-methionine-binding positions include 431–433 (IGS) and Glu484. Residues 515 to 516 (RC) and Trp561 contribute to the 5-methyltetrahydropteroyltri-L-glutamate site. Asp599 is a binding site for L-homocysteine. An L-methionine-binding site is contributed by Asp599. Position 605 (Glu605) interacts with 5-methyltetrahydropteroyltri-L-glutamate. 3 residues coordinate Zn(2+): His641, Cys643, and Glu665. Residue His694 is the Proton donor of the active site. Cys726 serves as a coordination point for Zn(2+).

It belongs to the vitamin-B12 independent methionine synthase family. It depends on Zn(2+) as a cofactor.

It catalyses the reaction 5-methyltetrahydropteroyltri-L-glutamate + L-homocysteine = tetrahydropteroyltri-L-glutamate + L-methionine. It functions in the pathway amino-acid biosynthesis; L-methionine biosynthesis via de novo pathway; L-methionine from L-homocysteine (MetE route): step 1/1. Functionally, catalyzes the transfer of a methyl group from 5-methyltetrahydrofolate to homocysteine resulting in methionine formation. The sequence is that of 5-methyltetrahydropteroyltriglutamate--homocysteine methyltransferase from Escherichia coli O157:H7.